The primary structure comprises 207 residues: Na(+)-translocating ferredoxin:NAD(+) oxidoreductase complex subunit G (207 aa).

Residues 18–38 (GLILFVISAVAACALALTNYV) form a helical membrane-spanning segment. T185 is subject to FMN phosphoryl threonine.

The protein belongs to the RnfG family. In terms of assembly, the complex is composed of six subunits: RnfA, RnfB, RnfC, RnfD, RnfE and RnfG. FMN is required as a cofactor.

It is found in the cell membrane. The catalysed reaction is 2 reduced [2Fe-2S]-[ferredoxin] + Na(+)(in) + NAD(+) + H(+) = 2 oxidized [2Fe-2S]-[ferredoxin] + Na(+)(out) + NADH. Its function is as follows. Part of a membrane-bound complex that couples electron transfer with translocation of ions across the membrane. Couples electron transfer from reduced ferredoxin to NAD(+) with electrogenic movement of Na(+) out of the cell. Involved in caffeate respiration. This Acetobacterium woodii (strain ATCC 29683 / DSM 1030 / JCM 2381 / KCTC 1655 / WB1) protein is Na(+)-translocating ferredoxin:NAD(+) oxidoreductase complex subunit G.